We begin with the raw amino-acid sequence, 255 residues long: Syntaxin-6 (255 aa).

N-acetylserine is present on S2. S2 carries the post-translational modification Phosphoserine. The interaction with BLTP3B stretch occupies residues S2–Q112. The interval S2–Q168 is required for interaction with VPS51. Over S2–Q234 the chain is Cytoplasmic. Positions E41–N74 form a coiled coil. 2 positions are modified to phosphoserine: S129 and S152. Positions Q163–V225 constitute a t-SNARE coiled-coil homology domain. Residues W235–L255 form a helical; Anchor for type IV membrane protein membrane-spanning segment.

It belongs to the syntaxin family. In terms of assembly, identified in a complex containing STX6, STX12, VAMP4 and VTI1A. Binds EEA1. Interacts with VPS45A and GOPC. Interacts with MARCHF2; the interaction promotes MARCHF2-mediated ubiquitination and degradation of CFTR. Interacts with MARCHF3. Interacts with BLTP3B (via C-terminal coiled-coil domain). Interacts with BAIAP3; this interaction is increased in the presence of calcium. Interacts (via N-terminus) with VPS51. Interacts with VPS13B. In terms of tissue distribution, widely expressed, with relatively higher expression in brain, lung and kidney.

Its subcellular location is the golgi apparatus membrane. It localises to the golgi apparatus. The protein resides in the trans-Golgi network membrane. It is found in the recycling endosome membrane. Its function is as follows. SNARE promoting movement of transport vesicles to target membranes. Targets endosomes to the trans-Golgi network, and may therefore function in retrograde trafficking. Together with SNARE STX12, promotes movement of vesicles from endosomes to the cell membrane, and may therefore function in the endocytic recycling pathway. In Rattus norvegicus (Rat), this protein is Syntaxin-6 (Stx6).